Reading from the N-terminus, the 384-residue chain is Polyketide synthase BAS (384 aa).

Residue C157 is the Nucleophile and monoketide coumarate intermediate of the active site. At C157 the chain carries S-(4-hydroxycinnamyl)cysteine.

This sequence belongs to the thiolase-like superfamily. Chalcone/stilbene synthases family. As to quaternary structure, homodimer.

It catalyses the reaction 4-coumaroyl-CoA + malonyl-CoA + H2O + H(+) = 4-hydroxybenzalacetone + 2 CO2 + 2 CoA. Its pathway is secondary metabolite biosynthesis; flavonoid biosynthesis. Its function is as follows. Polyketide synthase producing 4-hydroxybenzalacetone. Can use p-coumaryl-CoA as substrate but does not accept hexanoyl-CoA, isobutyryl-CoA, isovaleryl-CoA, and acetyl-CoA as a substrates. Catalyzes the initial key reaction step in the biosynthesis of phenylbutanoids. This is Polyketide synthase BAS (BAS) from Rheum palmatum (Chinese rhubarb).